Here is a 600-residue protein sequence, read N- to C-terminus: Glutamine--fructose-6-phosphate aminotransferase [isomerizing] (600 aa).

The active-site Nucleophile; for GATase activity is the cysteine 2. The Glutamine amidotransferase type-2 domain maps to cysteine 2 to asparagine 217. 2 consecutive SIS domains span residues isoleucine 283–leucine 422 and leucine 452–proline 590. Lysine 595 acts as the For Fru-6P isomerization activity in catalysis.

Homodimer.

Its subcellular location is the cytoplasm. The enzyme catalyses D-fructose 6-phosphate + L-glutamine = D-glucosamine 6-phosphate + L-glutamate. In terms of biological role, catalyzes the first step in hexosamine metabolism, converting fructose-6P into glucosamine-6P using glutamine as a nitrogen source. The polypeptide is Glutamine--fructose-6-phosphate aminotransferase [isomerizing] (Oceanobacillus iheyensis (strain DSM 14371 / CIP 107618 / JCM 11309 / KCTC 3954 / HTE831)).